A 310-amino-acid polypeptide reads, in one-letter code: UPF0324 membrane protein VP0936 (310 aa).

The next 10 membrane-spanning stretches (helical) occupy residues 7–29 (PFGL…LVIG), 44–63 (IASF…GFGI), 75–94 (GIGL…SLIA), 104–126 (AYLI…APAI), 133–155 (IGLA…PVIG), 165–187 (FGTW…SAYG), 199–218 (LARA…IFSR), 228–250 (LVIP…FPQL), 257–279 (IFTI…ISIS), and 289–308 (LLFG…SWLV).

Belongs to the UPF0324 family.

It is found in the cell membrane. This Vibrio parahaemolyticus serotype O3:K6 (strain RIMD 2210633) protein is UPF0324 membrane protein VP0936.